The primary structure comprises 126 residues: uncharacterized protein (126 aa).

This is an uncharacterized protein from Salmonella typhi.